The chain runs to 243 residues: 2-C-methyl-D-erythritol 4-phosphate cytidylyltransferase (243 aa).

Belongs to the IspD/TarI cytidylyltransferase family. IspD subfamily.

The enzyme catalyses 2-C-methyl-D-erythritol 4-phosphate + CTP + H(+) = 4-CDP-2-C-methyl-D-erythritol + diphosphate. It participates in isoprenoid biosynthesis; isopentenyl diphosphate biosynthesis via DXP pathway; isopentenyl diphosphate from 1-deoxy-D-xylulose 5-phosphate: step 2/6. Functionally, catalyzes the formation of 4-diphosphocytidyl-2-C-methyl-D-erythritol from CTP and 2-C-methyl-D-erythritol 4-phosphate (MEP). This chain is 2-C-methyl-D-erythritol 4-phosphate cytidylyltransferase, found in Colwellia psychrerythraea (strain 34H / ATCC BAA-681) (Vibrio psychroerythus).